We begin with the raw amino-acid sequence, 1396 residues long: DNA-directed RNA polymerase subunit beta' (1396 aa).

Zn(2+) contacts are provided by cysteine 71, cysteine 73, cysteine 86, and cysteine 89. Aspartate 462, aspartate 464, and aspartate 466 together coordinate Mg(2+). The Zn(2+) site is built by cysteine 810, cysteine 884, cysteine 891, and cysteine 894. Over residues 1372-1382 the composition is skewed to basic and acidic residues; it reads DEQLAQQREDA. Residues 1372-1396 form a disordered region; that stretch reads DEQLAQQREDAMEPLPAEIALSDAE.

It belongs to the RNA polymerase beta' chain family. In terms of assembly, the RNAP catalytic core consists of 2 alpha, 1 beta, 1 beta' and 1 omega subunit. When a sigma factor is associated with the core the holoenzyme is formed, which can initiate transcription. Requires Mg(2+) as cofactor. The cofactor is Zn(2+).

It carries out the reaction RNA(n) + a ribonucleoside 5'-triphosphate = RNA(n+1) + diphosphate. In terms of biological role, DNA-dependent RNA polymerase catalyzes the transcription of DNA into RNA using the four ribonucleoside triphosphates as substrates. The chain is DNA-directed RNA polymerase subunit beta' from Caulobacter vibrioides (strain ATCC 19089 / CIP 103742 / CB 15) (Caulobacter crescentus).